We begin with the raw amino-acid sequence, 854 residues long: Cell division control protein 24 (854 aa).

Residues 1–14 (MAIQTRFASGTSLS) show a composition bias toward polar residues. The segment at 1-24 (MAIQTRFASGTSLSDLKPKPSATS) is disordered. The region spanning 135-246 (PNMEDTLLTF…VVETLMNSSP (112 aa)) is the Calponin-homology (CH) domain. The 177-residue stretch at 278 to 454 (EYVKIIKEFV…KNIARSINEN (177 aa)) folds into the DH domain. One can recognise a PH domain in the interval 478-668 (RISKFGELLY…WSSCLQQLIH (191 aa)). Disordered regions lie at residues 542–571 (ISAS…SNNI) and 674–745 (QFKA…FESE). A compositionally biased stretch (low complexity) spans 682 to 707 (STSTTSSTAKSSSMMSPTTTMNTPNH). Positions 761 to 854 (SILFRISYNN…NEKFLNIRLY (94 aa)) constitute a PB1 domain.

In terms of assembly, interacts with AXL2.

In terms of biological role, promotes the exchange of CDC42-bound GDP by GTP. Controls the polarity of calmodulin, and the calcium regulatory process of bud emergence. CDC24 may be involved in the initial selection and organization of the budding site. The protein is Cell division control protein 24 (CDC24) of Saccharomyces cerevisiae (strain ATCC 204508 / S288c) (Baker's yeast).